The following is a 287-amino-acid chain: Putative esterase/lipase HI_0193 (287 aa).

The region spanning 47–273 (PVLIFIHGLF…SGHWVHAEKP (227 aa)) is the AB hydrolase-1 domain. Catalysis depends on residues Ser-119 and His-266.

Belongs to the DmpD/TodF/XylF esterase family.

This chain is Putative esterase/lipase HI_0193, found in Haemophilus influenzae (strain ATCC 51907 / DSM 11121 / KW20 / Rd).